Consider the following 614-residue polypeptide: V-type proton ATPase catalytic subunit A isoform 2 (614 aa).

A Phosphoserine modification is found at Ser142. 247–254 contacts ATP; sequence GAFGCGKT.

The protein belongs to the ATPase alpha/beta chains family. V-ATPase is a heteromultimeric enzyme made up of two complexes: the ATP-hydrolytic V1 complex and the proton translocation V0 complex. The V1 complex consists of three catalytic AB heterodimers that form a heterohexamer, three peripheral stalks each consisting of EG heterodimers, one central rotor including subunits D and F, and the regulatory subunits C and H. The proton translocation complex V0 consists of the proton transport subunit a, a ring of proteolipid subunits c9c'', rotary subunit d, subunits e and f, and the accessory subunits VhaAC45 and ATP6AP2.

It catalyses the reaction ATP + H2O + 4 H(+)(in) = ADP + phosphate + 5 H(+)(out). With respect to regulation, ATP hydrolysis occurs at the interface between the nucleotide-binding domains of subunits A and B. ATP hydrolysis triggers a conformational change in the subunits D and F, which induces a shift of subunit d. The c-ring is subsequently rotated and results in a continuous proton translocation across the membrane. Functionally, catalytic subunit of the V1 complex of vacuolar(H+)-ATPase (V-ATPase), a multisubunit enzyme composed of a peripheral complex (V1) that hydrolyzes ATP and a membrane integral complex (V0) that translocates protons. V-ATPase is responsible for acidifying and maintaining the pH of intracellular compartments and in some cell types, is targeted to the plasma membrane, where it is responsible for acidifying the extracellular environment. The polypeptide is V-type proton ATPase catalytic subunit A isoform 2 (Vha68-2) (Drosophila melanogaster (Fruit fly)).